Consider the following 92-residue polypeptide: Acylphosphatase (92 aa).

The Acylphosphatase-like domain occupies 3–92 (TKHVLVSGIV…GPRSTHFEVT (90 aa)). Active-site residues include Arg-18 and Asn-36.

It belongs to the acylphosphatase family.

The enzyme catalyses an acyl phosphate + H2O = a carboxylate + phosphate + H(+). This chain is Acylphosphatase (acyP), found in Alcanivorax borkumensis (strain ATCC 700651 / DSM 11573 / NCIMB 13689 / SK2).